The sequence spans 120 residues: Cytochrome c oxidase subunit 5 (120 aa).

A Blocked amino end (Ser) modification is found at S2. Residues C76, H84, C99, and C102 each coordinate Zn(2+).

Belongs to the cytochrome c oxidase subunit 5B family. In terms of assembly, component of the cytochrome c oxidase (complex IV, CIV), a multisubunit enzyme composed of a catalytic core of 3 subunits and several supernumerary subunits. The complex exists as a monomer or a dimer and forms supercomplexes (SCs) in the inner mitochondrial membrane with ubiquinol-cytochrome c oxidoreductase (cytochrome b-c1 complex, complex III, CIII). Slime mold cytochrome c oxidase consists of at least seven different polypeptides species, subunits I, II, III, IV, V, VI, and VIIe/s in order of MW.

The protein localises to the mitochondrion inner membrane. It participates in energy metabolism; oxidative phosphorylation. Component of the cytochrome c oxidase, the last enzyme in the mitochondrial electron transport chain which drives oxidative phosphorylation. The respiratory chain contains 3 multisubunit complexes succinate dehydrogenase (complex II, CII), ubiquinol-cytochrome c oxidoreductase (cytochrome b-c1 complex, complex III, CIII) and cytochrome c oxidase (complex IV, CIV), that cooperate to transfer electrons derived from NADH and succinate to molecular oxygen, creating an electrochemical gradient over the inner membrane that drives transmembrane transport and the ATP synthase. Cytochrome c oxidase is the component of the respiratory chain that catalyzes the reduction of oxygen to water. Electrons originating from reduced cytochrome c in the intermembrane space (IMS) are transferred via the dinuclear copper A center (CU(A)) of subunit 2 and heme A of subunit 1 to the active site in subunit 1, a binuclear center (BNC) formed by heme A3 and copper B (CU(B)). The BNC reduces molecular oxygen to 2 water molecules using 4 electrons from cytochrome c in the IMS and 4 protons from the mitochondrial matrix. The protein is Cytochrome c oxidase subunit 5 (cxeA) of Dictyostelium discoideum (Social amoeba).